A 339-amino-acid chain; its full sequence is Dihydroorotase (339 aa).

Residues His12 and His14 each contribute to the Zn(2+) site. Residues 14–16 (HVR) and Asn40 contribute to the substrate site. Residues Lys94, His133, His167, and Asp239 each contribute to the Zn(2+) site. An N6-carboxylysine modification is found at Lys94. Residue His133 participates in substrate binding. Residue Asp239 is part of the active site. His243 and Ala255 together coordinate substrate.

The protein belongs to the metallo-dependent hydrolases superfamily. DHOase family. Class II DHOase subfamily. In terms of assembly, homodimer. It depends on Zn(2+) as a cofactor.

It carries out the reaction (S)-dihydroorotate + H2O = N-carbamoyl-L-aspartate + H(+). It participates in pyrimidine metabolism; UMP biosynthesis via de novo pathway; (S)-dihydroorotate from bicarbonate: step 3/3. Its function is as follows. Catalyzes the reversible cyclization of carbamoyl aspartate to dihydroorotate. The protein is Dihydroorotase of Helicobacter pylori (strain G27).